A 579-amino-acid polypeptide reads, in one-letter code: Matrix metalloproteinase-C (579 aa).

An N-terminal signal peptide occupies residues 1 to 17 (MRLIYVIAILLVSTCQA). Positions 18–129 (GFFSSLVSRF…SRCGVTDAPL (112 aa)) are cleaved as a propeptide — activation peptide. A disordered region spans residues 32–51 (NSSPSSSSSSSSFSNSRKPS). Positions 33–50 (SSPSSSSSSSSFSNSRKP) are enriched in low complexity. The Cysteine switch motif lies at 120–127 (SRCGVTDA). Zn(2+)-binding residues include Cys122, His200, Asp202, His215, and His225. N-linked (GlcNAc...) asparagine glycosylation occurs at Asn231. His254 is a Zn(2+) binding site. The active site involves Glu255. Zn(2+) is bound by residues His258 and His264. Residues 307–394 (SGRSSSGSDF…SSSGSSGGGC (88 aa)) are disordered. The span at 315–324 (DFGGSSGGGS) shows a compositional bias: gly residues. Residues 325–341 (RTTARPTTTTRSWFGRF) are compositionally biased toward low complexity. A compositionally biased stretch (gly residues) spans 373-394 (WGSGSGSSGRGGSSSGSSGGGC). 2 Hemopexin repeats span residues 395–437 (PSHI…FPSA) and 438–490 (PTPV…LGFS).

It belongs to the peptidase M10A family. Requires Zn(2+) as cofactor.

It localises to the secreted. The protein resides in the extracellular space. Its subcellular location is the extracellular matrix. Its activity is regulated as follows. Inhibited by human TIMP1 and TIMP2 and the broad MMP inhibitors BB94 (Batimastat) and CT543. Functionally, metalloproteinase. This Caenorhabditis elegans protein is Matrix metalloproteinase-C.